The following is a 205-amino-acid chain: Heme-binding protein 2 (205 aa).

The interval 1–39 (MAEPLQPDPGAAEDAAAQAVETPGWKAPEDAGPQPGSYE) is disordered. N-acetylalanine is present on alanine 2. At serine 181 the chain carries Phosphoserine.

It belongs to the HEBP family. Monomer. Interacts with LRPPRC. May interact with BCL2L1; an interaction with BCL2L1 was observed using a peptide, but not with the full-length protein. The full-length protein would have to undergo a major conformation change for the interaction to occur. Interacts with PDCD6. In terms of tissue distribution, detected in placenta.

The protein resides in the cytoplasm. It localises to the mitochondrion. Can promote mitochondrial permeability transition and facilitate necrotic cell death under different types of stress conditions. The polypeptide is Heme-binding protein 2 (HEBP2) (Homo sapiens (Human)).